Here is a 259-residue protein sequence, read N- to C-terminus: Deoxyribose-phosphate aldolase (259 aa).

Aspartate 102 acts as the Proton donor/acceptor in catalysis. Residue lysine 167 is the Schiff-base intermediate with acetaldehyde of the active site. The active-site Proton donor/acceptor is lysine 201.

The protein belongs to the DeoC/FbaB aldolase family. DeoC type 2 subfamily.

It localises to the cytoplasm. It catalyses the reaction 2-deoxy-D-ribose 5-phosphate = D-glyceraldehyde 3-phosphate + acetaldehyde. The protein operates within carbohydrate degradation; 2-deoxy-D-ribose 1-phosphate degradation; D-glyceraldehyde 3-phosphate and acetaldehyde from 2-deoxy-alpha-D-ribose 1-phosphate: step 2/2. Catalyzes a reversible aldol reaction between acetaldehyde and D-glyceraldehyde 3-phosphate to generate 2-deoxy-D-ribose 5-phosphate. This is Deoxyribose-phosphate aldolase from Klebsiella pneumoniae (strain 342).